Reading from the N-terminus, the 634-residue chain is Chaperone protein HtpG (634 aa).

The segment at Met-1 to Arg-344 is a; substrate-binding. A b region spans residues Glu-345 to Lys-561. The segment at Leu-562 to Gly-634 is c.

This sequence belongs to the heat shock protein 90 family. Homodimer.

The protein localises to the cytoplasm. Molecular chaperone. Has ATPase activity. The protein is Chaperone protein HtpG of Vibrio vulnificus (strain YJ016).